Consider the following 332-residue polypeptide: Potassium channel subfamily K member 17 (332 aa).

At 1 to 20 (MYRPRARAAPEGRVRGCAVP) the chain is on the cytoplasmic side. The helical transmembrane segment at 21 to 43 (STVLLLLAYLAYLALGTGVFWTL) threads the bilayer. Residues N65 and N94 are each glycosylated (N-linked (GlcNAc...) asparagine). Residues 106–124 (SFFFSVSTITTIGYGNLSP) constitute an intramembrane region (pore-forming). The K(+) site is built by T116, I117, G118, and Y119. The segment at 116–121 (TIGYGN) is selectivity filter 1. The helical transmembrane segment at 128–148 (AARLFCIFFALVGIPLNLVVL) threads the bilayer. Residues 149 to 179 (NRLGHLMQQGVNHWASRLGGTWQDPDKARWL) are Cytoplasmic-facing. A helical transmembrane segment spans residues 180–200 (AGSGALLSGLLLFLLLPPLLF). The segment at residues 211–230 (GFYFAFITLSTVGFGDYVIG) is an intramembrane region (pore-forming). T221, V222, G223, and F224 together coordinate K(+). A selectivity filter 2 region spans residues 221-226 (TVGFGD). The helical transmembrane segment at 244–264 (MVSLWILFGMAWLALIIKLIL) threads the bilayer. Residues 265-332 (SQLETPGRVC…AHAAGCGKDS (68 aa)) are Cytoplasmic-facing. The interval 287-312 (SQSWRQGPDREPESHSPQQGCYPEGP) is disordered.

The protein belongs to the two pore domain potassium channel (TC 1.A.1.8) family. In terms of assembly, homodimer; disulfide-linked. Heterodimer with KCNK5 and KCNK16. In terms of tissue distribution, widely expressed. Highly expressed in aorta and coronary artery. Expressed in pancreas, in both endocrine (alpha, beta, gamma, delta, and epsilon) and exocrine (acinar and ductal) cells.

It is found in the cell membrane. It carries out the reaction K(+)(in) = K(+)(out). The catalysed reaction is Rb(+)(in) = Rb(+)(out). It catalyses the reaction Cs(+)(in) = Cs(+)(out). Its activity is regulated as follows. Inhibited by Ba(2+), quinidine, chloroform and halothane. Activated at alkaline pH. Activated by quinine and isoflurane. Functionally, k(+) channel that conducts voltage-dependent outward rectifying currents upon membrane depolarization. Voltage sensing is coupled to K(+) electrochemical gradient in an 'ion flux gating' mode where outward but not inward ion flow opens the gate. Homo- and heterodimerizes to form functional channels with distinct regulatory and gating properties. Present in the cardiac conduction system where it may regulate action potential duration and beating frequency of cardiac myocytes. Permeable to other monovalent cations such as Rb(+) and Cs(+). The sequence is that of Potassium channel subfamily K member 17 from Homo sapiens (Human).